A 366-amino-acid chain; its full sequence is Peptide chain release factor 1 (366 aa).

Residue Q239 is modified to N5-methylglutamine.

The protein belongs to the prokaryotic/mitochondrial release factor family. In terms of processing, methylated by PrmC. Methylation increases the termination efficiency of RF1.

Its subcellular location is the cytoplasm. Its function is as follows. Peptide chain release factor 1 directs the termination of translation in response to the peptide chain termination codons UAG and UAA. The polypeptide is Peptide chain release factor 1 (Baumannia cicadellinicola subsp. Homalodisca coagulata).